The following is a 108-amino-acid chain: Ig kappa chain V-V region HP R16.7 (108 aa).

The framework-1 stretch occupies residues 1–23 (DIQMTQTTSSLSASLGDRVTISC). The cysteines at positions 23 and 88 are disulfide-linked. A complementarity-determining-1 region spans residues 24–34 (RASQDISNYLN). The framework-2 stretch occupies residues 35–49 (WYQQKPDGTVKLLIY). The interval 50-56 (YTSRLHS) is complementarity-determining-2. Residues 57–88 (GVPSRFSGSGSGTDYSLTISNLEQEDIATYFC) form a framework-3 region. The interval 89–97 (QQGNSLPRT) is complementarity-determining-3. The framework-4 stretch occupies residues 98–108 (FGGGTKLEIKR).

This chain is Ig kappa chain V-V region HP R16.7, found in Mus musculus (Mouse).